The chain runs to 360 residues: Phospho-N-acetylmuramoyl-pentapeptide-transferase (360 aa).

Helical transmembrane passes span Arg-25–Ile-45, Thr-73–Leu-93, Tyr-97–Tyr-117, Trp-132–Ala-152, Thr-167–Ser-187, Gly-199–Ser-219, Ala-236–Phe-256, Val-263–Ile-283, Val-288–Val-308, and Val-338–Lys-358.

The protein belongs to the glycosyltransferase 4 family. MraY subfamily. Mg(2+) serves as cofactor.

Its subcellular location is the cell inner membrane. It catalyses the reaction UDP-N-acetyl-alpha-D-muramoyl-L-alanyl-gamma-D-glutamyl-meso-2,6-diaminopimeloyl-D-alanyl-D-alanine + di-trans,octa-cis-undecaprenyl phosphate = di-trans,octa-cis-undecaprenyl diphospho-N-acetyl-alpha-D-muramoyl-L-alanyl-D-glutamyl-meso-2,6-diaminopimeloyl-D-alanyl-D-alanine + UMP. It functions in the pathway cell wall biogenesis; peptidoglycan biosynthesis. Functionally, catalyzes the initial step of the lipid cycle reactions in the biosynthesis of the cell wall peptidoglycan: transfers peptidoglycan precursor phospho-MurNAc-pentapeptide from UDP-MurNAc-pentapeptide onto the lipid carrier undecaprenyl phosphate, yielding undecaprenyl-pyrophosphoryl-MurNAc-pentapeptide, known as lipid I. In Azotobacter vinelandii (strain DJ / ATCC BAA-1303), this protein is Phospho-N-acetylmuramoyl-pentapeptide-transferase.